The following is a 49-amino-acid chain: Protein YlcJ (49 aa).

Positions 1–21 (MSLVLCFLLMSLFFMYSFVLS) are cleaved as a signal peptide.

This is Protein YlcJ from Escherichia coli (strain K12).